The following is a 164-amino-acid chain: Gastrin-releasing peptide (164 aa).

The signal sequence occupies residues 1 to 27; sequence MGGGGPRRPGTLPLLALLALLAAHGGA. M54 is modified (methionine amide). Positions 58-164 are excised as a propeptide; that stretch reads STGDFPYAYE…YQLCPTSALS (107 aa).

Belongs to the bombesin/neuromedin-B/ranatensin family.

It is found in the secreted. The protein localises to the cytoplasmic vesicle. The protein resides in the secretory vesicle lumen. Stimulates the release of gastrin and other gastrointestinal hormones. Stimulates pancreatic protein and fluid secretion, and increases acid secretion from the avian proventriculus. The polypeptide is Gastrin-releasing peptide (GRP) (Gallus gallus (Chicken)).